Here is a 756-residue protein sequence, read N- to C-terminus: MTSASNPPAFRLETSDGDEEGSAEVNKGKNEPPPMESPFQGEDRNFSPQIKVNLNYRKGLGPSQQDPNRFDRDRLFSVVSRGVPEELTGLLEYLRRTSKYLTDSAYTEGSTGKTCLMKAVLNLQDGVNACILPLLQIDRDSGNPQPLVNAQCTDEFYRGHSALHIAIEKRSLWCVKLLVENGANVHIRACGRFFQKHQGTCFYFGELPLSLAACTKQWDVVTYLLENPHQPASLEATDSLGNTVLHALVMIADNSPENSALVIHMYDSLLQMGARLCPTVQLEDICNHQGLTPLKLAAKEGKIEIFRHILQREFSGLYQPLSRKFTEWCYGPVRVSLYDLSSVDSWEKNSVLEIIAFHCKSPHRHRMVVLEPLNKLLQEKWDRLIPRFFFNFACYLVYMIIFTIVAYHQPSLEQPAIPSSKATFGDSMLLLGHILILLGGIYLLLGQLWYFWRRRLFIWISFMDSYFEILFLVQALLTVLSQVLRFVETEWYLPLLVSSLVLGWLNLLYYTRGFQHTGIYSVMIQKVILRDLLRFLLVYLVFLFGFAVALVSLSREARSPKAPEDSNTTVTEKPTLGQEEEPVPYGGILDASLELFKFTIGMGELAFQEQLRFRGVVLLLLLAYVLLTYVLLLNMLIALMSETVNSVATDSWSIWKLQKAISVLEMENGYWWCRRKRHRAGRLLKVGTKGDGIPDERWCFRVEEVNWAAWEKTLPTLSEDPSGAGITGYKKNPTSKPGKNSASEEDHLPLQVLQSH.

The disordered stretch occupies residues 1–45; it reads MTSASNPPAFRLETSDGDEEGSAEVNKGKNEPPPMESPFQGEDRN. Residues 1–385 form a required for interaction with SLC50A1 region; it reads MTSASNPPAF…LLQEKWDRLI (385 aa). At 1-387 the chain is on the cytoplasmic side; it reads MTSASNPPAF…QEKWDRLIPR (387 aa). Phosphoserine is present on residues serine 15 and serine 77. 6 ANK repeats span residues 68–110, 111–157, 158–203, 204–239, 240–288, and 289–315; these read NRFD…TEGS, TGKT…DEFY, RGHS…TCFY, FGEL…ATDS, LGNT…ICNH, and QGLT…REFS. Residues 388 to 408 traverse the membrane as a helical segment; that stretch reads FFFNFACYLVYMIIFTIVAYH. Over 409 to 428 the chain is Extracellular; it reads QPSLEQPAIPSSKATFGDSM. Residues 429 to 449 form a helical membrane-spanning segment; that stretch reads LLLGHILILLGGIYLLLGQLW. Residues 450-455 are Cytoplasmic-facing; sequence YFWRRR. Residues 456-476 form a helical membrane-spanning segment; it reads LFIWISFMDSYFEILFLVQAL. Residues 477–490 are Extracellular-facing; sequence LTVLSQVLRFVETE. A helical membrane pass occupies residues 491–511; that stretch reads WYLPLLVSSLVLGWLNLLYYT. Residues 512–532 lie on the Cytoplasmic side of the membrane; sequence RGFQHTGIYSVMIQKVILRDL. Residues 533 to 553 form a helical membrane-spanning segment; the sequence is LRFLLVYLVFLFGFAVALVSL. Positions 559-583 are disordered; that stretch reads SPKAPEDSNTTVTEKPTLGQEEEPV. N-linked (GlcNAc...) asparagine glycosylation occurs at asparagine 567. The pore-forming intramembrane region spans 568 to 604; the sequence is TTVTEKPTLGQEEEPVPYGGILDASLELFKFTIGMGE. The chain crosses the membrane as a helical span at residues 617-637; it reads VLLLLLAYVLLTYVLLLNMLI. Topologically, residues 638–756 are cytoplasmic; that stretch reads ALMSETVNSV…HLPLQVLQSH (119 aa). Residues 719 to 756 are disordered; sequence EDPSGAGITGYKKNPTSKPGKNSASEEDHLPLQVLQSH. The segment covering 732–741 has biased composition (polar residues); it reads NPTSKPGKNS. Phosphoserine is present on residues serine 743 and serine 755.

This sequence belongs to the transient receptor (TC 1.A.4) family. TrpV subfamily. TRPV2 sub-subfamily. As to quaternary structure, homotetramer. Interacts with a cAMP-dependent protein kinase type II regulatory subunit (PRKAR2A or PRKAR2B) and ACBD3. Interacts with SLC50A1; the interaction probably occurs intracellularly and depends on TRPV2 N-glycosylation. Post-translationally, N-glycosylated. In terms of processing, phosphorylated by PKA. In terms of tissue distribution, abundantly expressed in spleen, placenta, skeleton muscle, lung and brain.

It is found in the cell membrane. Its subcellular location is the cytoplasm. It localises to the melanosome. It catalyses the reaction Ca(2+)(in) = Ca(2+)(out). It carries out the reaction Mg(2+)(in) = Mg(2+)(out). The enzyme catalyses Na(+)(in) = Na(+)(out). The catalysed reaction is K(+)(in) = K(+)(out). Its function is as follows. Calcium-permeable, non-selective cation channel with an outward rectification. Seems to be regulated, at least in part, by IGF1, PDGF and neuropeptide head activator. May transduce physical stimuli in mast cells. Activated by temperatures higher than 52 degrees Celsius; is not activated by vanilloids and acidic pH. This Mus musculus (Mouse) protein is Transient receptor potential cation channel subfamily V member 2 (Trpv2).